A 261-amino-acid chain; its full sequence is Arcelin-5B (261 aa).

Positions 1-21 are cleaved as a signal peptide; the sequence is MASSKLLSLALFLVLLTHANS. 2 N-linked (GlcNAc...) asparagine glycosylation sites follow: Asn-91 and Asn-100. Cys-167 and Cys-203 are disulfide-bonded.

This sequence belongs to the leguminous lectin family. Monomer.

Seed storage. This carbohydrate-binding lectin has toxic effects on bean bruchid pests. This Phaseolus vulgaris (Kidney bean) protein is Arcelin-5B (ARC5B).